A 271-amino-acid chain; its full sequence is Nus factor SuhB (271 aa).

Residues Glu-67, Asp-86, and Leu-88 each contribute to the Mg(2+) site. A substrate-binding site is contributed by Glu-67. Residues Leu-88–Thr-91, Arg-187, and Asp-216 contribute to the substrate site.

It belongs to the inositol monophosphatase superfamily. Homodimer. The rRNA transcription and antitermination complex (rrnTAC) consists of RNA polymerase (RNAP), NusA, NusB, NusE (rpsJ), NusG, SubB, ribosomal protein S4, DNA and precursor rRNA; S4 is more flexible than other subunits. Interacts with the ribosome and with RNA polymerase. Requires Mg(2+) as cofactor.

The protein resides in the cytoplasm. The catalysed reaction is a myo-inositol phosphate + H2O = myo-inositol + phosphate. In terms of biological role, part of the processive rRNA transcription and antitermination complex (rrnTAC). The complex forms an RNA-chaperone ring around the RNA exit tunnel of RNA polymerase (RNAP). It supports rapid transcription and antitermination of rRNA operons, cotranscriptional rRNA folding, and annealing of distal rRNA regions to allow correct ribosome biogenesis. This subunit may play a central role in organizing the structure. A ribosome-associated protein, deletion of which alters the expression of 494 genes, suggesting a role in global gene regulation. Involved in control of pathogenesis-related genes. Required for the activation of virulence factors associated with acute infections (type 3 secretion system, T3SS) while suppressing virulence factors associated with chronic infections (biofilm formation and type 6 secretion system, T6SS). It probably acts at a post-transcriptional level. In Pseudomonas aeruginosa (strain ATCC 15692 / DSM 22644 / CIP 104116 / JCM 14847 / LMG 12228 / 1C / PRS 101 / PAO1), this protein is Nus factor SuhB.